We begin with the raw amino-acid sequence, 224 residues long: UPF0758 protein PM1152 (224 aa).

Positions 102-224 (AFKNSENVRF…YYSFAENRLL (123 aa)) constitute an MPN domain. H173, H175, and D186 together coordinate Zn(2+). The short motif at 173-186 (HNHPSGNPEPSASD) is the JAMM motif element.

It belongs to the UPF0758 family.

This is UPF0758 protein PM1152 from Pasteurella multocida (strain Pm70).